The primary structure comprises 84 residues: Protein SlyX homolog (84 aa).

The protein belongs to the SlyX family.

In Mannheimia succiniciproducens (strain KCTC 0769BP / MBEL55E), this protein is Protein SlyX homolog.